Reading from the N-terminus, the 458-residue chain is tRNA modification GTPase MnmE (458 aa).

Residues R26, E88, and R127 each contribute to the (6S)-5-formyl-5,6,7,8-tetrahydrofolate site. A TrmE-type G domain is found at 224 to 378 (GLSTAIIGRP…IEDRINQLFF (155 aa)). Residue N234 coordinates K(+). GTP-binding positions include 234–239 (NVGKSS), 253–259 (TDIAGTT), and 278–281 (DTAG). A Mg(2+)-binding site is contributed by S238. K(+)-binding residues include T253, I255, and T258. A Mg(2+)-binding site is contributed by T259. K458 is a (6S)-5-formyl-5,6,7,8-tetrahydrofolate binding site.

It belongs to the TRAFAC class TrmE-Era-EngA-EngB-Septin-like GTPase superfamily. TrmE GTPase family. Homodimer. Heterotetramer of two MnmE and two MnmG subunits. K(+) serves as cofactor.

The protein resides in the cytoplasm. Exhibits a very high intrinsic GTPase hydrolysis rate. Involved in the addition of a carboxymethylaminomethyl (cmnm) group at the wobble position (U34) of certain tRNAs, forming tRNA-cmnm(5)s(2)U34. This is tRNA modification GTPase MnmE from Streptococcus pyogenes serotype M4 (strain MGAS10750).